A 201-amino-acid polypeptide reads, in one-letter code: Orotate phosphoribosyltransferase (201 aa).

113–121 contributes to the 5-phospho-alpha-D-ribose 1-diphosphate binding site; sequence EDIITTGKS. Residues Thr117 and Arg145 each contribute to the orotate site.

The protein belongs to the purine/pyrimidine phosphoribosyltransferase family. PyrE subfamily. As to quaternary structure, homodimer. It depends on Mg(2+) as a cofactor.

It catalyses the reaction orotidine 5'-phosphate + diphosphate = orotate + 5-phospho-alpha-D-ribose 1-diphosphate. The protein operates within pyrimidine metabolism; UMP biosynthesis via de novo pathway; UMP from orotate: step 1/2. Catalyzes the transfer of a ribosyl phosphate group from 5-phosphoribose 1-diphosphate to orotate, leading to the formation of orotidine monophosphate (OMP). This Helicobacter acinonychis (strain Sheeba) protein is Orotate phosphoribosyltransferase.